A 213-amino-acid polypeptide reads, in one-letter code: Uracil phosphoribosyltransferase (213 aa).

5-phospho-alpha-D-ribose 1-diphosphate-binding positions include Arg78, Arg103, and 131–139 (DPMLATGGT). Residues Ile197 and 202 to 204 (GDA) contribute to the uracil site. Asp203 is a binding site for 5-phospho-alpha-D-ribose 1-diphosphate.

It belongs to the UPRTase family. The cofactor is Mg(2+).

It catalyses the reaction UMP + diphosphate = 5-phospho-alpha-D-ribose 1-diphosphate + uracil. Its pathway is pyrimidine metabolism; UMP biosynthesis via salvage pathway; UMP from uracil: step 1/1. Its activity is regulated as follows. Allosterically activated by GTP. Functionally, catalyzes the conversion of uracil and 5-phospho-alpha-D-ribose 1-diphosphate (PRPP) to UMP and diphosphate. The chain is Uracil phosphoribosyltransferase from Bifidobacterium adolescentis (strain ATCC 15703 / DSM 20083 / NCTC 11814 / E194a).